Reading from the N-terminus, the 66-residue chain is Beta-mammal toxin Css2 (66 aa).

Positions 1–66 (KEGYLVSKST…VWPLPNKTCN (66 aa)) constitute an LCN-type CS-alpha/beta domain. Intrachain disulfides connect C12/C65, C16/C41, C25/C46, and C29/C48. Residue N66 is modified to Asparagine amide.

The protein belongs to the long (4 C-C) scorpion toxin superfamily. Sodium channel inhibitor family. Beta subfamily. In terms of processing, C-terminal amidation increases its affinity for sodium channels. Expressed by the venom gland.

The protein localises to the secreted. Beta toxin that binds site-4 of sodium channels (Nav) and reduces peak current (observed on Nav1.6/SCN8A (IC(50)=307 nM)), shifts the voltage of activation toward more negative potentials (observed on Nav1.6, Nav1.1 (weak), Nav1.2 (weak), and Nav1.7 (weak)), and induces resurgent currents at negative voltages following brief and strong depolarizations (observed on Nav1.6, Nav1.1 (weak), and Nav1.7 (weak)). A reduction of peak current of Nav1.5/SCN7A has been observed in another study (IC(50)=35-40 nM). This toxin is only active on mammals. It has been shown to bind phospholipids. The polypeptide is Beta-mammal toxin Css2 (Centruroides suffusus (Durango bark scorpion)).